Reading from the N-terminus, the 401-residue chain is Probable tRNA sulfurtransferase (401 aa).

The THUMP domain occupies 60 to 165 (EALFPHLKQV…EEATFLTIRD (106 aa)). ATP is bound by residues 183–184 (ML), 208–209 (HF), Arg265, Gly287, and Gln296.

Belongs to the ThiI family.

It localises to the cytoplasm. The catalysed reaction is [ThiI sulfur-carrier protein]-S-sulfanyl-L-cysteine + a uridine in tRNA + 2 reduced [2Fe-2S]-[ferredoxin] + ATP + H(+) = [ThiI sulfur-carrier protein]-L-cysteine + a 4-thiouridine in tRNA + 2 oxidized [2Fe-2S]-[ferredoxin] + AMP + diphosphate. It carries out the reaction [ThiS sulfur-carrier protein]-C-terminal Gly-Gly-AMP + S-sulfanyl-L-cysteinyl-[cysteine desulfurase] + AH2 = [ThiS sulfur-carrier protein]-C-terminal-Gly-aminoethanethioate + L-cysteinyl-[cysteine desulfurase] + A + AMP + 2 H(+). It participates in cofactor biosynthesis; thiamine diphosphate biosynthesis. Its function is as follows. Catalyzes the ATP-dependent transfer of a sulfur to tRNA to produce 4-thiouridine in position 8 of tRNAs, which functions as a near-UV photosensor. Also catalyzes the transfer of sulfur to the sulfur carrier protein ThiS, forming ThiS-thiocarboxylate. This is a step in the synthesis of thiazole, in the thiamine biosynthesis pathway. The sulfur is donated as persulfide by IscS. This chain is Probable tRNA sulfurtransferase, found in Bacillus subtilis (strain 168).